The sequence spans 869 residues: MTDTPAERPDPGVAGDADWAAQARPLLVHADMRLCKRFDQGEPIERLVALRARAVDQLMRNAWMRCIPADSGLSLHAVGGYGRGELFPRSDVDVLVLGDTAAQQQHEQALARLFALLWDVGLPISHAVRSPAQCTAAAADQTVLTALIESRALVADGQARAALATAIAPPQVWPPRDFFQAKREELLARHQRFGDTADNLEPDIKDGPGGLRDLQTLGWMALRAFGVKDLEALVGLGHVGFDEAAALRREREELARLRFGLHIVANRPEERLRFDYQKTLAERLGFADDPESLGVEKMMQRFYRSAALIRRISDRLLQRFEEQFDGEATPEPLGGGFSLRRGYLAADAESWPDGDVLQVFALFAQWAAHREVRGLHSLTARALAEVLRDLPAYDIADATARERFMALLRGPRAVETLNRMARLGVLGQWIPAFASVSGRMQFDLFHVYTVDQHTLMVLRNIALFAAGRADERFSIAHEVWPRLRKPELLLLAGLFHDIAKGRGGDHSELGAVDARAFCLAHRLSEGDTELVTWLVEQHLRMSVTAQKQDISDPEVIHRFATLVGTRERLDYLYLLTCADIAGTSPKLWNAWKDRLLADLYFAARRALREGLEHPPPREERLREARESARTLMQAQGHDDVTIDRQFAGMPDENFLRFRPEQLAWQAASLIEVEIGQTLVKARRAVPDNDALEVFVYSPDRDGLFAAIVATLDRKGYGIHRARVLDAPHDAIFDVFEVLPQETYADGDPQRLAATLRQVLAGDLHKVRPARRAVPRQLRHFRFAPRVEFSESAGGRRTRISLVAPDRPGLLADVAHVLRMQHLRVHDARIATFGERAEDQFQITDEHDRPLSESARQALRDALCACLDPV.

The uridylyltransferase stretch occupies residues 1-332 (MTDTPAERPD…QFDGEATPEP (332 aa)). The interval 333 to 691 (LGGGFSLRRG…RRAVPDNDAL (359 aa)) is uridylyl-removing. Positions 450–572 (VDQHTLMVLR…VGTRERLDYL (123 aa)) constitute an HD domain. ACT domains follow at residues 692–774 (EVFV…RAVP) and 798–869 (RISL…LDPV).

Belongs to the GlnD family. Requires Mg(2+) as cofactor.

It catalyses the reaction [protein-PII]-L-tyrosine + UTP = [protein-PII]-uridylyl-L-tyrosine + diphosphate. It carries out the reaction [protein-PII]-uridylyl-L-tyrosine + H2O = [protein-PII]-L-tyrosine + UMP + H(+). Its activity is regulated as follows. Uridylyltransferase (UTase) activity is inhibited by glutamine, while glutamine activates uridylyl-removing (UR) activity. Its function is as follows. Modifies, by uridylylation and deuridylylation, the PII regulatory proteins (GlnB and homologs), in response to the nitrogen status of the cell that GlnD senses through the glutamine level. Under low glutamine levels, catalyzes the conversion of the PII proteins and UTP to PII-UMP and PPi, while under higher glutamine levels, GlnD hydrolyzes PII-UMP to PII and UMP (deuridylylation). Thus, controls uridylylation state and activity of the PII proteins, and plays an important role in the regulation of nitrogen assimilation and metabolism. The polypeptide is Bifunctional uridylyltransferase/uridylyl-removing enzyme (Xanthomonas euvesicatoria pv. vesicatoria (strain 85-10) (Xanthomonas campestris pv. vesicatoria)).